Reading from the N-terminus, the 564-residue chain is Pumilio homolog 9 (564 aa).

The PUM-HD domain occupies 222-564 (LEDTVLIGQG…KIFSKTILKK (343 aa)). 8 Pumilio repeats span residues 249–284 (EIYGSVNLMAKDQIGCRVLQKLVEEGTFHEAKVILL), 285–320 (AIIDHVVELSMDPFGNYIVQKLFDVSDEEQRTLIVS), 321–359 (VLTSNPRELIRICLNTYGTRVVQKMIETVKTKQQIALVK), 361–396 (GLKPGFLALVKDLNGNHVIQSCLQTLGPNDNEFVLE), 397–432 (AATKYCAEIAIHRHGCCVLQCCISNSVGLQRERLVA), 433–469 (EISRNSLHLSQDPFGNYVVQYLIDQQVSAVKLLVQFR), 470–501 (MHYAELATQKFSSHVIEKCLRKYPESRAEIVR), and 502–539 (ELLCVPNFEYLLQDPYANYVIQTALSVTKGPVRAKLVA).

It is found in the cytoplasm. Functionally, sequence-specific RNA-binding protein that regulates translation and mRNA stability by binding the 3'-UTR of target mRNAs. The sequence is that of Pumilio homolog 9 (APUM9) from Arabidopsis thaliana (Mouse-ear cress).